The chain runs to 621 residues: uncharacterized protein (621 aa).

2 disordered regions span residues 92–134 (FRNS…QINQ) and 268–310 (KINH…DDEI). The segment covering 94–134 (NSSNQSSQSNQVNQSNQSSPSSQISPSSQVNKFNQSSQINQ) has biased composition (low complexity). Residues 296–310 (TNDETNDETDNDDEI) show a composition bias toward acidic residues. The stretch at 354–401 (ANKIQNKIIQIVETLNAYKNKQSQIAIEAKNKIKHITVSNKEVSENIE) forms a coiled coil.

This is an uncharacterized protein from Acanthamoeba polyphaga mimivirus (APMV).